The chain runs to 268 residues: Putative S-adenosyl-L-methionine-dependent methyltransferase MAP_0663 (268 aa).

S-adenosyl-L-methionine is bound by residues Asp-124 and Asp-153 to Leu-154.

This sequence belongs to the UPF0677 family.

Exhibits S-adenosyl-L-methionine-dependent methyltransferase activity. The protein is Putative S-adenosyl-L-methionine-dependent methyltransferase MAP_0663 of Mycolicibacterium paratuberculosis (strain ATCC BAA-968 / K-10) (Mycobacterium paratuberculosis).